The primary structure comprises 392 residues: Formate-dependent phosphoribosylglycinamide formyltransferase (392 aa).

N(1)-(5-phospho-beta-D-ribosyl)glycinamide-binding positions include 20–21 and E80; that span reads EL. ATP contacts are provided by residues R112, K153, 158 to 163, 193 to 196, and E201; these read SSGKGQ and EEFI. The 190-residue stretch at 117-306 folds into the ATP-grasp domain; sequence RLAAEELGLP…EFELHVRAIL (190 aa). 2 residues coordinate Mg(2+): E265 and E277. N(1)-(5-phospho-beta-D-ribosyl)glycinamide is bound by residues D284, K354, and 361–362; that span reads RR.

This sequence belongs to the PurK/PurT family. Homodimer.

The catalysed reaction is N(1)-(5-phospho-beta-D-ribosyl)glycinamide + formate + ATP = N(2)-formyl-N(1)-(5-phospho-beta-D-ribosyl)glycinamide + ADP + phosphate + H(+). The protein operates within purine metabolism; IMP biosynthesis via de novo pathway; N(2)-formyl-N(1)-(5-phospho-D-ribosyl)glycinamide from N(1)-(5-phospho-D-ribosyl)glycinamide (formate route): step 1/1. Involved in the de novo purine biosynthesis. Catalyzes the transfer of formate to 5-phospho-ribosyl-glycinamide (GAR), producing 5-phospho-ribosyl-N-formylglycinamide (FGAR). Formate is provided by PurU via hydrolysis of 10-formyl-tetrahydrofolate. The polypeptide is Formate-dependent phosphoribosylglycinamide formyltransferase (Geobacter metallireducens (strain ATCC 53774 / DSM 7210 / GS-15)).